The chain runs to 501 residues: ATP-dependent rRNA helicase RRP3 (501 aa).

Positions 3-44 form a coiled coil; that stretch reads KIVKRKEKKANDELTSLAEKIRAKALENQKKLIEAEKEGGSE. A disordered region spans residues 36 to 79; that stretch reads EAEKEGGSESDSEEDATAEKKKVLKSKSKSTVSTQNENTNEDES. 3 positions are modified to phosphoserine: serine 43, serine 45, and serine 47. The short motif at 81–109 is the Q motif element; sequence ESFSELNLVPELIQACKNLNYSKPTPIQS. The region spanning 112–284 is the Helicase ATP-binding domain; sequence IPPALEGHDI…RASLTNPVKC (173 aa). Position 125–132 (125–132) interacts with ATP; it reads AQTGSGKT. The short motif at 231-234 is the DEAD box element; sequence DEAD. Positions 307–461 constitute a Helicase C-terminal domain; that stretch reads LKNTYLIYLL…NIILTLRDSV (155 aa). The tract at residues 480 to 501 is disordered; the sequence is IARGKGRRGRMMTRENMDMGER. Residues 491–501 show a composition bias toward basic and acidic residues; that stretch reads MTRENMDMGER.

It belongs to the DEAD box helicase family. DDX47/RRP3 subfamily. Interacts with the SSU processome.

Its subcellular location is the nucleus. It carries out the reaction ATP + H2O = ADP + phosphate + H(+). Its activity is regulated as follows. ATPase activity is stimulated upon the addition of RNA. Functionally, ATP-dependent rRNA helicase required for pre-ribosomal RNA processing. Involved in the maturation of the 35S-pre-rRNA and to its cleavage to mature 18S rRNA. The chain is ATP-dependent rRNA helicase RRP3 from Saccharomyces cerevisiae (strain ATCC 204508 / S288c) (Baker's yeast).